A 322-amino-acid chain; its full sequence is Ribosomal RNA small subunit methyltransferase H (322 aa).

Residues 34–36 (GGH), Asp-59, Phe-86, Asp-112, and Gln-119 contribute to the S-adenosyl-L-methionine site.

The protein belongs to the methyltransferase superfamily. RsmH family.

It is found in the cytoplasm. The catalysed reaction is cytidine(1402) in 16S rRNA + S-adenosyl-L-methionine = N(4)-methylcytidine(1402) in 16S rRNA + S-adenosyl-L-homocysteine + H(+). Functionally, specifically methylates the N4 position of cytidine in position 1402 (C1402) of 16S rRNA. The protein is Ribosomal RNA small subunit methyltransferase H of Chlorobium limicola (strain DSM 245 / NBRC 103803 / 6330).